The primary structure comprises 729 residues: MGDEDWEAEIIKPHISSYVPVFEKDRYSSGANGDTFNRTPASSSEMGDGSSRRDHFMRSGFASGRSLGNRDPGESNKRENTSTVGGFGVGKSFGNRGFSNNKFEEGDSSGFWRESSIDCEDNQTRNRGFSKRGGYQDGNDSEALGSSRRGGRGSFRGCRGGFGRGSPNSDYEQDEGTQRSGGIFGSRRSALSGAGNGDTFQSRSGGGSGRGGYKGLNEEVITGSGKNSWKSEAEGGESGDTQGPKVTYIPPPPPEDEDSIFAHYQTGINFDKYDTILVEVSGHDPPPAILTFEEANLCQTLNNNIAKAGYTKLTPVQKYSIPIIQGGRDLMACAQTGSGKTAAFLLPILAHMMRDGITASRFKELQEPECIIVAPTRELINQIYLEARKFSFGTCVRAVVIYGGTQLGHSIRQIVQGCNILCATPGRLMDVIGKEKIGLRQVKYLVLDEADRMLDMGFGPEMKKLISCPGMPSKEQRQTLMFSATFPEEIQRLAGEFLKSNYLFVAVGQVGGACRDVQQTILQVGQYSKREKLVEILRNIGDERTMVFVETKKKADFIATFLCQEKISTTSIHGDREQREREQALGDFRCGKCPVLVATSVAARGLDIENVQHVINFDLPSTIDEYVHRIGRTGRCGNTGRAISFFDLESDSQLAQPLVKVLSDAQQDVPAWLEEIAFSTYGPGFSGNARGNVFASVDTRKNYPGKSSLNTAGFSSTQAPNPVDDESWD.

The segment at 22-246 (FEKDRYSSGA…ESGDTQGPKV (225 aa)) is disordered. Positions 29 to 45 (SGANGDTFNRTPASSSE) are enriched in polar residues. The span at 71–80 (DPGESNKREN) shows a compositional bias: basic and acidic residues. 2 stretches are compositionally biased toward gly residues: residues 152–164 (RGSF…GFGR) and 204–214 (SGGGSGRGGYK). 2 positions are modified to phosphoserine: Ser224 and Ser228. Residues 230–249 (KSEAEGGESGDTQGPKVTYI) form an interaction with RANBP9 region. The Q motif motif lies at 290–318 (LTFEEANLCQTLNNNIAKAGYTKLTPVQK). The Helicase ATP-binding domain occupies 321–504 (IPIIQGGRDL…GEFLKSNYLF (184 aa)). 334–341 (AQTGSGKT) contacts ATP. Residues 448-451 (DEAD) carry the DEAD box motif. A Helicase C-terminal domain is found at 532-677 (KLVEILRNIG…DVPAWLEEIA (146 aa)). The segment covering 706 to 720 (KSSLNTAGFSSTQAP) has biased composition (polar residues). The disordered stretch occupies residues 706-729 (KSSLNTAGFSSTQAPNPVDDESWD). Ser727 carries the post-translational modification Phosphoserine.

This sequence belongs to the DEAD box helicase family. DDX4/VASA subfamily. In terms of assembly, found in a mRNP complex, at least composed of TDRD1, TDRD6, TDRD7 and DDX4. Interacts with RANBP9. Interacts with RANBP10. Interacts with PIWIL2 and MAEL. Interacts with BMAL1 and CLOCK. Interacts with Tex19.1 and, probably, Tex19.2. Interacts with RBM46.

It localises to the cytoplasm. The protein localises to the perinuclear region. It catalyses the reaction ATP + H2O = ADP + phosphate + H(+). Functionally, ATP-dependent RNA helicase required during spermatogenesis to repress transposable elements and preventing their mobilization, which is essential for the germline integrity. Acts via the piRNA metabolic process, which mediates the repression of transposable elements during meiosis by forming complexes composed of piRNAs and Piwi proteins and governs the methylation and subsequent repression of transposons. Involved in the secondary piRNAs metabolic process, the production of piRNAs in fetal male germ cells through a ping-pong amplification cycle. Required for PIWIL2 slicing-triggered piRNA biogenesis: helicase activity enables utilization of one of the slice cleavage fragments generated by PIWIL2 and processing these pre-piRNAs into piRNAs. The sequence is that of Probable ATP-dependent RNA helicase DDX4 (DDX4) from Bos taurus (Bovine).